The chain runs to 150 residues: MRCVVYSIAKSSPLELVKIYQKQCKRFDCELELVDLFPKNTANAQKVSKELAQKSYSLAFEPYLNLKAKNIALHPKAQRGDSFAFSKMLENHLNINFFIAGAYGFEENFLKDCQAWSLSEMTFSHEVAKIVLCEQIYRALSIIFKHPYHK.

S-adenosyl-L-methionine-binding positions include Ala100 and 118–123 (LSEMTF).

The protein belongs to the RNA methyltransferase RlmH family. As to quaternary structure, homodimer.

It localises to the cytoplasm. It catalyses the reaction pseudouridine(1915) in 23S rRNA + S-adenosyl-L-methionine = N(3)-methylpseudouridine(1915) in 23S rRNA + S-adenosyl-L-homocysteine + H(+). In terms of biological role, specifically methylates the pseudouridine at position 1915 (m3Psi1915) in 23S rRNA. The protein is Ribosomal RNA large subunit methyltransferase H of Helicobacter pylori (strain P12).